We begin with the raw amino-acid sequence, 528 residues long: Glucose-6-phosphate isomerase (528 aa).

Residue glutamate 322 is the Proton donor of the active site. Catalysis depends on residues histidine 351 and lysine 455.

Belongs to the GPI family.

It localises to the cytoplasm. The enzyme catalyses alpha-D-glucose 6-phosphate = beta-D-fructose 6-phosphate. Its pathway is carbohydrate biosynthesis; gluconeogenesis. It functions in the pathway carbohydrate degradation; glycolysis; D-glyceraldehyde 3-phosphate and glycerone phosphate from D-glucose: step 2/4. Its function is as follows. Catalyzes the reversible isomerization of glucose-6-phosphate to fructose-6-phosphate. This chain is Glucose-6-phosphate isomerase, found in Synechococcus elongatus (strain ATCC 33912 / PCC 7942 / FACHB-805) (Anacystis nidulans R2).